A 94-amino-acid polypeptide reads, in one-letter code: Co-chaperonin GroES (94 aa).

This sequence belongs to the GroES chaperonin family. As to quaternary structure, heptamer of 7 subunits arranged in a ring. Interacts with the chaperonin GroEL.

The protein localises to the cytoplasm. Its function is as follows. Together with the chaperonin GroEL, plays an essential role in assisting protein folding. The GroEL-GroES system forms a nano-cage that allows encapsulation of the non-native substrate proteins and provides a physical environment optimized to promote and accelerate protein folding. GroES binds to the apical surface of the GroEL ring, thereby capping the opening of the GroEL channel. The protein is Co-chaperonin GroES of Clostridium perfringens (strain ATCC 13124 / DSM 756 / JCM 1290 / NCIMB 6125 / NCTC 8237 / Type A).